The sequence spans 265 residues: MKIAIAGASGRMGRMLIETVLNDPEVKLSGALDRTGAPQLGQDAGAFLGKQTGVLMSDDIDAVLAQSDYLIDFTRPDGTLAHIEAALRTNTKLVIGTTGFDDAQKARIRAASEKTGIVFASNFSVGVNVTMKLLEFAARHFSQGYDIEIIEAHHRHKVDAPSGTALTMGEVIAGALGRKLEDCAVYAREGVTGERDPSTIGFSAIRGGDIVGDHTVLFAGIGERIEITHKSASRLSYAQGALRAVRFLEGHSNGLFDMQDVLGLR.

NAD(+) contacts are provided by residues 7 to 12 and Asp-33; that span reads GASGRM. Arg-34 contacts NADP(+). NAD(+) contacts are provided by residues 96-98 and 120-123; these read GTT and ASNF. Catalysis depends on His-153, which acts as the Proton donor/acceptor. His-154 serves as a coordination point for (S)-2,3,4,5-tetrahydrodipicolinate. The Proton donor role is filled by Lys-157. 163–164 serves as a coordination point for (S)-2,3,4,5-tetrahydrodipicolinate; it reads GT.

This sequence belongs to the DapB family.

Its subcellular location is the cytoplasm. The enzyme catalyses (S)-2,3,4,5-tetrahydrodipicolinate + NAD(+) + H2O = (2S,4S)-4-hydroxy-2,3,4,5-tetrahydrodipicolinate + NADH + H(+). The catalysed reaction is (S)-2,3,4,5-tetrahydrodipicolinate + NADP(+) + H2O = (2S,4S)-4-hydroxy-2,3,4,5-tetrahydrodipicolinate + NADPH + H(+). It participates in amino-acid biosynthesis; L-lysine biosynthesis via DAP pathway; (S)-tetrahydrodipicolinate from L-aspartate: step 4/4. Functionally, catalyzes the conversion of 4-hydroxy-tetrahydrodipicolinate (HTPA) to tetrahydrodipicolinate. The polypeptide is 4-hydroxy-tetrahydrodipicolinate reductase (Paraburkholderia phymatum (strain DSM 17167 / CIP 108236 / LMG 21445 / STM815) (Burkholderia phymatum)).